Reading from the N-terminus, the 328-residue chain is Complex I intermediate-associated protein 30, mitochondrial (328 aa).

A mitochondrion-targeting transit peptide spans 1–24 (MSSIHKLLTGIYIHKNFLRPRAAL). The segment covering 44–54 (VTSVDRASQQG) has biased composition (polar residues). Residues 44–80 (VTSVDRASQQGKTEEGLQGHDHKEVALDAPSPDRTPE) form a disordered region. Positions 55–69 (KTEEGLQGHDHKEVA) are enriched in basic and acidic residues. A Phosphoserine modification is found at Ser-319.

The protein belongs to the CIA30 family. In terms of assembly, part of the mitochondrial complex I assembly/MCIA complex that comprises at least the core subunits TMEM126B, NDUFAF1, ECSIT and ACAD9 and complement subunits such as COA1 and TMEM186. Interacts with ECSIT. Interacts with ACAD9. At early stages of complex I assembly, it is found in intermediate subcomplexes that contain different subunits including NDUFB6, NDUFA6, NDUFA9, NDUFS3, NDUFS7, ND1, ND2 and ND3. Interacts with TMEM70 and TMEM242.

The protein localises to the mitochondrion. Its subcellular location is the mitochondrion matrix. In terms of biological role, as part of the MCIA complex, involved in the assembly of the mitochondrial complex I. This Mus musculus (Mouse) protein is Complex I intermediate-associated protein 30, mitochondrial.